A 381-amino-acid chain; its full sequence is ADP,ATP carrier protein 1, mitochondrial (381 aa).

The N-terminal 70 residues, 1–70 (MVDQVQHPTI…ATTASPVFVQ (70 aa)), are a transit peptide targeting the mitochondrion. 3 Solcar repeats span residues 78 to 171 (TNFA…FKRL), 183 to 276 (KWFA…VKPV), and 284 to 370 (DSFF…LQLI). 5 consecutive transmembrane segments (helical) span residues 80-107 (FALD…VKLL), 148-172 (TANV…KRLF), 181-201 (YWKW…SSLL), 252-273 (FNIS…YDSV), and 287-307 (FASF…SYPI). Positions 153 and 165 each coordinate ADP. Residue Arg-311 coordinates ADP. Positions 311-316 (RRRMMM) are important for transport activity. The Nucleotide carrier signature motif signature appears at 311–316 (RRRMMM). The helical transmembrane segment at 347–367 (AGANILRAVAGAGVLSGYDKL) threads the bilayer.

This sequence belongs to the mitochondrial carrier (TC 2.A.29) family. Monomer.

The protein localises to the mitochondrion inner membrane. The catalysed reaction is ADP(in) + ATP(out) = ADP(out) + ATP(in). The matrix-open state (m-state) is inhibited by the membrane-permeable bongkrekic acid (BKA). The cytoplasmic-open state (c-state) is inhibited by the membrane-impermeable toxic inhibitor carboxyatractyloside (CATR). Its function is as follows. ADP:ATP antiporter that mediates import of ADP into the mitochondrial matrix for ATP synthesis, and export of ATP out to fuel the cell. Cycles between the cytoplasmic-open state (c-state) and the matrix-open state (m-state): operates by the alternating access mechanism with a single substrate-binding site intermittently exposed to either the cytosolic (c-state) or matrix (m-state) side of the inner mitochondrial membrane. This Arabidopsis thaliana (Mouse-ear cress) protein is ADP,ATP carrier protein 1, mitochondrial (AAC1).